Consider the following 152-residue polypeptide: Ribosomal RNA large subunit methyltransferase H (152 aa).

S-adenosyl-L-methionine is bound by residues Leu65, Gly96, and 115 to 120 (LGPMTW).

Belongs to the RNA methyltransferase RlmH family. In terms of assembly, homodimer.

The protein resides in the cytoplasm. It catalyses the reaction pseudouridine(1915) in 23S rRNA + S-adenosyl-L-methionine = N(3)-methylpseudouridine(1915) in 23S rRNA + S-adenosyl-L-homocysteine + H(+). In terms of biological role, specifically methylates the pseudouridine at position 1915 (m3Psi1915) in 23S rRNA. The chain is Ribosomal RNA large subunit methyltransferase H from Gluconacetobacter diazotrophicus (strain ATCC 49037 / DSM 5601 / CCUG 37298 / CIP 103539 / LMG 7603 / PAl5).